Consider the following 76-residue polypeptide: Small proline-rich protein 2G (76 aa).

3 consecutive repeat copies span residues 21-29, 30-38, and 39-47. The 3 X 9 AA approximate tandem repeats stretch occupies residues 21–47; sequence PKCPEPCPLPKCPEPCPPPKCPEPCPE. Residues 55–76 form a disordered region; it reads QQKCPPVQTPPPCQQKCPPKSK.

This sequence belongs to the cornifin (SPRR) family. In terms of tissue distribution, expressed in uterus.

It is found in the cytoplasm. Functionally, cross-linked envelope protein of keratinocytes. It is a keratinocyte protein that first appears in the cell cytosol, but ultimately becomes cross-linked to membrane proteins by transglutaminase. All that results in the formation of an insoluble envelope beneath the plasma membrane. The polypeptide is Small proline-rich protein 2G (Sprr2g) (Mus musculus (Mouse)).